The primary structure comprises 116 residues: Cuticle protein AM1274 (116 aa).

Residue Gln-1 is modified to Pyrrolidone carboxylic acid. Residues 1 to 22 form a disordered region; that stretch reads QLANEPPIEIIRQESTDNGDGN. Residues 20–85 enclose the Chitin-binding type R&amp;R domain; the sequence is DGNFNFLFET…PVSDFIPTPH (66 aa). The O-linked (HexNAc) threonine glycan is linked to Thr-83.

As to expression, arthrodial membrane.

This chain is Cuticle protein AM1274, found in Cancer pagurus (Rock crab).